Reading from the N-terminus, the 363-residue chain is Holliday junction branch migration complex subunit RuvB (363 aa).

The disordered stretch occupies residues methionine 1–aspartate 32. The interval alanine 27–tyrosine 207 is large ATPase domain (RuvB-L). Residues leucine 46, arginine 47, glycine 88, lysine 91, threonine 92, threonine 93, glutamate 154–phenylalanine 156, arginine 197, tyrosine 207, and arginine 244 each bind ATP. Residue threonine 92 coordinates Mg(2+). Positions aspartate 208 to aspartate 278 are small ATPAse domain (RuvB-S). The head domain (RuvB-H) stretch occupies residues glutamate 281–tyrosine 363. Positions 336 and 341 each coordinate DNA.

This sequence belongs to the RuvB family. Homohexamer. Forms an RuvA(8)-RuvB(12)-Holliday junction (HJ) complex. HJ DNA is sandwiched between 2 RuvA tetramers; dsDNA enters through RuvA and exits via RuvB. An RuvB hexamer assembles on each DNA strand where it exits the tetramer. Each RuvB hexamer is contacted by two RuvA subunits (via domain III) on 2 adjacent RuvB subunits; this complex drives branch migration. In the full resolvosome a probable DNA-RuvA(4)-RuvB(12)-RuvC(2) complex forms which resolves the HJ.

The protein resides in the cytoplasm. The enzyme catalyses ATP + H2O = ADP + phosphate + H(+). In terms of biological role, the RuvA-RuvB-RuvC complex processes Holliday junction (HJ) DNA during genetic recombination and DNA repair, while the RuvA-RuvB complex plays an important role in the rescue of blocked DNA replication forks via replication fork reversal (RFR). RuvA specifically binds to HJ cruciform DNA, conferring on it an open structure. The RuvB hexamer acts as an ATP-dependent pump, pulling dsDNA into and through the RuvAB complex. RuvB forms 2 homohexamers on either side of HJ DNA bound by 1 or 2 RuvA tetramers; 4 subunits per hexamer contact DNA at a time. Coordinated motions by a converter formed by DNA-disengaged RuvB subunits stimulates ATP hydrolysis and nucleotide exchange. Immobilization of the converter enables RuvB to convert the ATP-contained energy into a lever motion, pulling 2 nucleotides of DNA out of the RuvA tetramer per ATP hydrolyzed, thus driving DNA branch migration. The RuvB motors rotate together with the DNA substrate, which together with the progressing nucleotide cycle form the mechanistic basis for DNA recombination by continuous HJ branch migration. Branch migration allows RuvC to scan DNA until it finds its consensus sequence, where it cleaves and resolves cruciform DNA. The polypeptide is Holliday junction branch migration complex subunit RuvB (Corynebacterium glutamicum (strain R)).